We begin with the raw amino-acid sequence, 224 residues long: UPF0758 protein Lm4b_01560 (224 aa).

The 123-residue stretch at 102-224 folds into the MPN domain; the sequence is VVRCPEDAVK…YISLKEKGYF (123 aa). Positions 173, 175, and 186 each coordinate Zn(2+). The JAMM motif motif lies at 173–186; it reads HNHPSGDPTPSSED.

The protein belongs to the UPF0758 family.

This Listeria monocytogenes serotype 4b (strain CLIP80459) protein is UPF0758 protein Lm4b_01560.